The following is a 145-amino-acid chain: Small ribosomal subunit protein uS12 (145 aa).

The residue at position 64 (Pro-64) is a Hydroxyproline.

The protein belongs to the universal ribosomal protein uS12 family.

This is Small ribosomal subunit protein uS12 (rps23) from Aspergillus fumigatus (strain ATCC MYA-4609 / CBS 101355 / FGSC A1100 / Af293) (Neosartorya fumigata).